The sequence spans 276 residues: Putative pyruvate, phosphate dikinase regulatory protein (276 aa).

151–158 (GISRTSKT) provides a ligand contact to ADP.

Belongs to the pyruvate, phosphate/water dikinase regulatory protein family. PDRP subfamily.

It catalyses the reaction N(tele)-phospho-L-histidyl/L-threonyl-[pyruvate, phosphate dikinase] + ADP = N(tele)-phospho-L-histidyl/O-phospho-L-threonyl-[pyruvate, phosphate dikinase] + AMP + H(+). It carries out the reaction N(tele)-phospho-L-histidyl/O-phospho-L-threonyl-[pyruvate, phosphate dikinase] + phosphate + H(+) = N(tele)-phospho-L-histidyl/L-threonyl-[pyruvate, phosphate dikinase] + diphosphate. Its function is as follows. Bifunctional serine/threonine kinase and phosphorylase involved in the regulation of the pyruvate, phosphate dikinase (PPDK) by catalyzing its phosphorylation/dephosphorylation. The sequence is that of Putative pyruvate, phosphate dikinase regulatory protein from Streptococcus agalactiae serotype Ia (strain ATCC 27591 / A909 / CDC SS700).